The following is a 273-amino-acid chain: Shikimate dehydrogenase (NADP(+)) (273 aa).

Shikimate contacts are provided by residues 15 to 17 and threonine 62; that span reads SQS. Lysine 66 acts as the Proton acceptor in catalysis. Residue glutamate 78 coordinates NADP(+). Residues asparagine 87 and aspartate 102 each coordinate shikimate. NADP(+) contacts are provided by residues 127–131, 151–156, and methionine 215; these read GAGGA and NRTVIK. Tyrosine 217 provides a ligand contact to shikimate. Glycine 239 contributes to the NADP(+) binding site.

Belongs to the shikimate dehydrogenase family. Homodimer.

It carries out the reaction shikimate + NADP(+) = 3-dehydroshikimate + NADPH + H(+). It participates in metabolic intermediate biosynthesis; chorismate biosynthesis; chorismate from D-erythrose 4-phosphate and phosphoenolpyruvate: step 4/7. Functionally, involved in the biosynthesis of the chorismate, which leads to the biosynthesis of aromatic amino acids. Catalyzes the reversible NADPH linked reduction of 3-dehydroshikimate (DHSA) to yield shikimate (SA). The polypeptide is Shikimate dehydrogenase (NADP(+)) (Chromobacterium violaceum (strain ATCC 12472 / DSM 30191 / JCM 1249 / CCUG 213 / NBRC 12614 / NCIMB 9131 / NCTC 9757 / MK)).